Here is a 137-residue protein sequence, read N- to C-terminus: Nucleoside diphosphate kinase (137 aa).

Residues lysine 11, phenylalanine 59, arginine 87, threonine 93, arginine 104, and asparagine 114 each contribute to the ATP site. Catalysis depends on histidine 117, which acts as the Pros-phosphohistidine intermediate.

This sequence belongs to the NDK family. Homotetramer. The cofactor is Mg(2+).

The protein localises to the cytoplasm. The catalysed reaction is a 2'-deoxyribonucleoside 5'-diphosphate + ATP = a 2'-deoxyribonucleoside 5'-triphosphate + ADP. It carries out the reaction a ribonucleoside 5'-diphosphate + ATP = a ribonucleoside 5'-triphosphate + ADP. Its function is as follows. Major role in the synthesis of nucleoside triphosphates other than ATP. The ATP gamma phosphate is transferred to the NDP beta phosphate via a ping-pong mechanism, using a phosphorylated active-site intermediate. The chain is Nucleoside diphosphate kinase from Parafrankia sp. (strain EAN1pec).